The following is a 176-amino-acid chain: MSRIGLKTIEVPDSVTVTKEGDNITVKGPKGELTRYFDPKITFEQNDGEINFSRSSESDKALHGTERANLASMIEGVLNGYKKTLKLIGVGYRAQAQGNKITLNVGYSHPVVLTAPEGVSVKATSATDVEVEGVSKQDVGQFAAEIRAVRPPEPYKGKGIRYVDEYVRRKEGKTGK.

It belongs to the universal ribosomal protein uL6 family. As to quaternary structure, part of the 50S ribosomal subunit.

This protein binds to the 23S rRNA, and is important in its secondary structure. It is located near the subunit interface in the base of the L7/L12 stalk, and near the tRNA binding site of the peptidyltransferase center. In Lactobacillus acidophilus (strain ATCC 700396 / NCK56 / N2 / NCFM), this protein is Large ribosomal subunit protein uL6.